A 337-amino-acid chain; its full sequence is Ketol-acid reductoisomerase (NADP(+)) (337 aa).

In terms of domain architecture, KARI N-terminal Rossmann spans 1–180 (MQVYYDKDAD…GGTKGGVIET (180 aa)). Residues 24 to 27 (YGSQ), Arg47, and Ser51 each bind NADP(+). Residue His106 is part of the active site. Position 132 (Gly132) interacts with NADP(+). A KARI C-terminal knotted domain is found at 181-326 (TFREETETDL…ARLRAMMPWI (146 aa)). Positions 189, 193, 225, and 229 each coordinate Mg(2+). Ser250 is a substrate binding site.

Belongs to the ketol-acid reductoisomerase family. Mg(2+) serves as cofactor.

The catalysed reaction is (2R)-2,3-dihydroxy-3-methylbutanoate + NADP(+) = (2S)-2-acetolactate + NADPH + H(+). It catalyses the reaction (2R,3R)-2,3-dihydroxy-3-methylpentanoate + NADP(+) = (S)-2-ethyl-2-hydroxy-3-oxobutanoate + NADPH + H(+). It functions in the pathway amino-acid biosynthesis; L-isoleucine biosynthesis; L-isoleucine from 2-oxobutanoate: step 2/4. It participates in amino-acid biosynthesis; L-valine biosynthesis; L-valine from pyruvate: step 2/4. Involved in the biosynthesis of branched-chain amino acids (BCAA). Catalyzes an alkyl-migration followed by a ketol-acid reduction of (S)-2-acetolactate (S2AL) to yield (R)-2,3-dihydroxy-isovalerate. In the isomerase reaction, S2AL is rearranged via a Mg-dependent methyl migration to produce 3-hydroxy-3-methyl-2-ketobutyrate (HMKB). In the reductase reaction, this 2-ketoacid undergoes a metal-dependent reduction by NADPH to yield (R)-2,3-dihydroxy-isovalerate. The polypeptide is Ketol-acid reductoisomerase (NADP(+)) (Neisseria gonorrhoeae (strain ATCC 700825 / FA 1090)).